We begin with the raw amino-acid sequence, 174 residues long: B3 domain-containing protein At2g31862 (174 aa).

The TF-B3 DNA-binding region spans 1-71; the sequence is MWVNLSCMCH…KLYIALVPLD (71 aa).

The protein resides in the nucleus. This chain is B3 domain-containing protein At2g31862, found in Arabidopsis thaliana (Mouse-ear cress).